Here is a 451-residue protein sequence, read N- to C-terminus: MSLLKSIPKVDKFIMNEAFEGLSRTLITKIAKKTLEELRNDILNNKIEKIDENTLINEVLDSYKDLTSPSLKSLINATGIIVHTNLGRSLLDEKSLTKAIKIATTYNNLEYDLKKGKRGERYEHITKSLQALTSCEDAIVVNNNASAVFLILNTFCKNKEVIVSRGELVEIGGSFRVPEVMNQSGAKLKEIGTTNKTHLRDYENAICEKTSMLMKVHKSNYSIEGFSSEVSFEVIVKIAQQNNLIDYFDMGSGHIIDLPYNLNKDEPSILDIMKYKPSLLSFSGDKLFGSVQAGIIIGKKELIAKIKKNQLLRMLRVDKITLALLEETLNSYLKNELDSIPTLKMLNTKIETLEQRANNLKEKCENFIKCEVIKTSTMVGGGTTPNKKIPTIALTLEHKNYKPNKLEEILRKNSIISRIENDKVLLDFRTILESDCKKIEEILKNLFESTK.

The residue at position 286 (Lys286) is an N6-(pyridoxal phosphate)lysine.

The protein belongs to the SelA family. The cofactor is pyridoxal 5'-phosphate.

The protein resides in the cytoplasm. It carries out the reaction L-seryl-tRNA(Sec) + selenophosphate + H(+) = L-selenocysteinyl-tRNA(Sec) + phosphate. It functions in the pathway aminoacyl-tRNA biosynthesis; selenocysteinyl-tRNA(Sec) biosynthesis; selenocysteinyl-tRNA(Sec) from L-seryl-tRNA(Sec) (bacterial route): step 1/1. In terms of biological role, converts seryl-tRNA(Sec) to selenocysteinyl-tRNA(Sec) required for selenoprotein biosynthesis. This is L-seryl-tRNA(Sec) selenium transferase from Aliarcobacter butzleri (strain RM4018) (Arcobacter butzleri).